A 254-amino-acid polypeptide reads, in one-letter code: Hydrolase tropI (254 aa).

Residues Cys141, Asp187, and His219 contribute to the active site.

The protein belongs to the dienelactone hydrolase family.

It participates in secondary metabolite biosynthesis. Hydrolase; part of the gene cluster that mediates the biosynthesis of the tropolone class of fungal maleic anhydrides. The pathway begins with the synthesis of 3-methylorcinaldehyde by the non-reducing polyketide synthase (PKS) tropA. 3-methylorcinaldehyde is the substrate for the FAD-dependent monooxygenase tropB to yield a dearomatized hydroxycyclohexadione. The 2-oxoglutarate-dependent dioxygenase tropC then performs the oxidative ring expansion to provide the first tropolone metabolite stipitaldehyde. Trop D converts stipitaldehyde into stipitacetal which is in turn converted to stipitalide by the short-chain dehydrogenase/reductase tropE. The next steps involve tropF, tropG, tropH, tropI and tropJ to form successive tropolone maleic anhydrides including stipitaldehydic, stipitatonic and stipitatic acids. This Talaromyces stipitatus (strain ATCC 10500 / CBS 375.48 / QM 6759 / NRRL 1006) (Penicillium stipitatum) protein is Hydrolase tropI.